Consider the following 106-residue polypeptide: Follitropin subunit beta (106 aa).

Disulfide bonds link Cys-1–Cys-49, Cys-15–Cys-64, Cys-18–Cys-102, Cys-26–Cys-80, Cys-30–Cys-82, and Cys-85–Cys-92. Residues Asn-5 and Asn-22 are each glycosylated (N-linked (GlcNAc...) asparagine).

Belongs to the glycoprotein hormones subunit beta family. Heterodimer. The active follitropin is a heterodimer composed of an alpha chain/CGA shared with other hormones and a unique beta chain/FSHB shown here.

The protein localises to the secreted. In terms of biological role, together with the alpha chain CGA constitutes follitropin, the follicle-stimulating hormone, and provides its biological specificity to the hormone heterodimer. Binds FSHR, a G protein-coupled receptor, on target cells to activate downstream signaling pathways. Follitropin is involved in follicle development and spermatogenesis in reproductive organs. This Struthio camelus (Common ostrich) protein is Follitropin subunit beta (FSHB).